The primary structure comprises 283 residues: Pantothenate synthetase (283 aa).

Residue 30–37 (MGYLHEGH) coordinates ATP. His37 (proton donor) is an active-site residue. Gln61 is a (R)-pantoate binding site. Gln61 is a binding site for beta-alanine. Residue 147–150 (GQKD) participates in ATP binding. Position 153 (Gln153) interacts with (R)-pantoate. ATP-binding positions include Val176 and 184–187 (MSSR).

It belongs to the pantothenate synthetase family. In terms of assembly, homodimer.

The protein localises to the cytoplasm. The catalysed reaction is (R)-pantoate + beta-alanine + ATP = (R)-pantothenate + AMP + diphosphate + H(+). It functions in the pathway cofactor biosynthesis; (R)-pantothenate biosynthesis; (R)-pantothenate from (R)-pantoate and beta-alanine: step 1/1. Catalyzes the condensation of pantoate with beta-alanine in an ATP-dependent reaction via a pantoyl-adenylate intermediate. This chain is Pantothenate synthetase, found in Thermoanaerobacter pseudethanolicus (strain ATCC 33223 / 39E) (Clostridium thermohydrosulfuricum).